A 125-amino-acid polypeptide reads, in one-letter code: 17 kDa gas vesicle protein (125 aa).

It belongs to the gas vesicle GvpC family.

Its subcellular location is the gas vesicle. In terms of biological role, gas vesicles (GV) are hollow, gas filled proteinaceous nanostructures. During planktonic growth they allow positioning of the organism at a favorable depth for light or nutrient acquisition. The sequence is that of 17 kDa gas vesicle protein from Dactylococcopsis salina (strain PCC 8305) (Myxobactron salinum).